A 222-amino-acid chain; its full sequence is N-acetyltransferase 8F1 (222 aa).

The chain crosses the membrane as a helical span at residues 53–73; sequence LVLVSGSWILAVICIFFLLLL. Residues 69-220 form the N-acetyltransferase domain; that stretch reads FLLLLLRLLA…CTIQLKYSFP (152 aa).

Belongs to the camello family.

It is found in the membrane. Its function is as follows. May play a role in regulation of gastrulation. This chain is N-acetyltransferase 8F1, found in Mus musculus (Mouse).